Consider the following 839-residue polypeptide: LPS-assembly protein LptD (839 aa).

Positions 1–21 (MAIGITACVLSLINYQGLAYS) are cleaved as a signal peptide.

This sequence belongs to the LptD family. In terms of assembly, component of the lipopolysaccharide transport and assembly complex. Interacts with LptE and LptA.

The protein resides in the cell outer membrane. Its function is as follows. Together with LptE, is involved in the assembly of lipopolysaccharide (LPS) at the surface of the outer membrane. This chain is LPS-assembly protein LptD, found in Legionella pneumophila subsp. pneumophila (strain Philadelphia 1 / ATCC 33152 / DSM 7513).